Reading from the N-terminus, the 331-residue chain is 5-formaminoimidazole-4-carboxamide-1-(beta)-D-ribofuranosyl 5'-monophosphate synthetase (331 aa).

Residues His9 and Ser69 each contribute to the 5-amino-1-(5-phospho-beta-D-ribosyl)imidazole-4-carboxamide site. In terms of domain architecture, ATP-grasp spans 76–322 (VELVEKMKVP…IAMELKQGLE (247 aa)). ATP is bound by residues 120–179 (PDDI…VPVY) and Glu201. Asn229 lines the 5-amino-1-(5-phospho-beta-D-ribosyl)imidazole-4-carboxamide pocket. Mg(2+) contacts are provided by Glu267 and Glu280.

Belongs to the phosphohexose mutase family. The cofactor is Mg(2+). Mn(2+) serves as cofactor.

It carries out the reaction 5-amino-1-(5-phospho-beta-D-ribosyl)imidazole-4-carboxamide + formate + ATP = 5-formamido-1-(5-phospho-D-ribosyl)imidazole-4-carboxamide + ADP + phosphate. The protein operates within purine metabolism; IMP biosynthesis via de novo pathway; 5-formamido-1-(5-phospho-D-ribosyl)imidazole-4-carboxamide from 5-amino-1-(5-phospho-D-ribosyl)imidazole-4-carboxamide (formate route): step 1/1. In terms of biological role, catalyzes the ATP- and formate-dependent formylation of 5-aminoimidazole-4-carboxamide-1-beta-d-ribofuranosyl 5'-monophosphate (AICAR) to 5-formaminoimidazole-4-carboxamide-1-beta-d-ribofuranosyl 5'-monophosphate (FAICAR) in the absence of folates. This chain is 5-formaminoimidazole-4-carboxamide-1-(beta)-D-ribofuranosyl 5'-monophosphate synthetase, found in Thermococcus kodakarensis (strain ATCC BAA-918 / JCM 12380 / KOD1) (Pyrococcus kodakaraensis (strain KOD1)).